Reading from the N-terminus, the 86-residue chain is Probable weak neurotoxin NNAM2 (86 aa).

An N-terminal signal peptide occupies residues 1–21 (MKTLLLTLVVVTIVCLDLGYT). Intrachain disulfides connect C24/C45, C27/C32, C38/C63, C67/C78, and C79/C84.

The protein belongs to the three-finger toxin family. Ancestral subfamily. Orphan group II sub-subfamily. Expressed by the venom gland.

The protein resides in the secreted. Its function is as follows. Binds with low affinity to muscular (alpha-1-beta-1-delta-epsilon/CHRNA1-CHRNB1-CHRND-CHRNE) and very low affinity to neuronal (alpha-7/CHRNA7) nicotinic acetylcholine receptor (nAChR). This is Probable weak neurotoxin NNAM2 from Naja atra (Chinese cobra).